Consider the following 270-residue polypeptide: ATP synthase subunit delta (270 aa).

It belongs to the ATPase delta chain family. As to quaternary structure, F-type ATPases have 2 components, F(1) - the catalytic core - and F(0) - the membrane proton channel. F(1) has five subunits: alpha(3), beta(3), gamma(1), delta(1), epsilon(1). F(0) has three main subunits: a(1), b(2) and c(10-14). The alpha and beta chains form an alternating ring which encloses part of the gamma chain. F(1) is attached to F(0) by a central stalk formed by the gamma and epsilon chains, while a peripheral stalk is formed by the delta and b chains.

The protein resides in the cell membrane. Functionally, f(1)F(0) ATP synthase produces ATP from ADP in the presence of a proton or sodium gradient. F-type ATPases consist of two structural domains, F(1) containing the extramembraneous catalytic core and F(0) containing the membrane proton channel, linked together by a central stalk and a peripheral stalk. During catalysis, ATP synthesis in the catalytic domain of F(1) is coupled via a rotary mechanism of the central stalk subunits to proton translocation. In terms of biological role, this protein is part of the stalk that links CF(0) to CF(1). It either transmits conformational changes from CF(0) to CF(1) or is implicated in proton conduction. This chain is ATP synthase subunit delta, found in Kocuria rhizophila (strain ATCC 9341 / DSM 348 / NBRC 103217 / DC2201).